The primary structure comprises 1459 residues: Mediator of RNA polymerase II transcription subunit 14 (1459 aa).

Residues 1-37 form a disordered region; the sequence is MAPVQLDNHQLIPPGGGGGSSGGGGSSSGSASAPAPP. Positions 14-27 are enriched in gly residues; that stretch reads PGGGGGSSGGGGSS. The LXXLL motif 1 signature appears at 75-79; it reads LTDLL. The segment at 194 to 572 is interaction with STAT2; sequence KQATLHQLNQ…VPNKPTQLSY (379 aa). The tract at residues 506-830 is interaction with SREBF1; it reads LGQQRCKQSI…TKGSSISIQW (325 aa). S623 and S992 each carry phosphoserine. The disordered stretch occupies residues 979 to 1171; sequence ARRRSVNEDD…NMPPPRKLPQ (193 aa). Polar residues-rich tracts occupy residues 1029-1059 and 1097-1106; these read PPTSYHSTVNQSPSMMHTQSPGNLHAASSPS and DPSSPYTMVS. Phosphoserine is present on residues S1117, S1124, S1133, S1141, and S1149. Residues 1152 to 1161 show a composition bias toward polar residues; it reads AGTSSQTMPT. The LXXLL motif 2 motif lies at 1187–1191; that stretch reads LNILL.

Belongs to the Mediator complex subunit 14 family. In terms of assembly, component of the Mediator complex, which is composed of MED1, MED4, MED6, MED7, MED8, MED9, MED10, MED11, MED12, MED13, MED13L, MED14, MED15, MED16, MED17, MED18, MED19, MED20, MED21, MED22, MED23, MED24, MED25, MED26, MED27, MED29, MED30, MED31, CCNC, CDK8 and CDC2L6/CDK11. The MED12, MED13, CCNC and CDK8 subunits form a distinct module termed the CDK8 module. Mediator containing the CDK8 module is less active than Mediator lacking this module in supporting transcriptional activation. Individual preparations of the Mediator complex lacking one or more distinct subunits have been variously termed ARC, CRSP, DRIP, PC2, SMCC and TRAP. Interacts with AR, ESR1, SREBF1 and STAT2. Interacts with GATA1.

Its subcellular location is the nucleus. In terms of biological role, component of the Mediator complex, a coactivator involved in the regulated transcription of nearly all RNA polymerase II-dependent genes. Mediator functions as a bridge to convey information from gene-specific regulatory proteins to the basal RNA polymerase II transcription machinery. Mediator is recruited to promoters by direct interactions with regulatory proteins and serves as a scaffold for the assembly of a functional preinitiation complex with RNA polymerase II and the general transcription factors. The sequence is that of Mediator of RNA polymerase II transcription subunit 14 (Med14) from Mus musculus (Mouse).